We begin with the raw amino-acid sequence, 196 residues long: MESHKPSTSKDDLILNIISRKIKQLPESDRNLLEYGSAYIGLNAAFGGLIANSLFRRILNVTQARLASSLPMAVIPFLTANLSYQSLVSLPLSTGDLNCETCTTTRGALVGLVMGGLYPILLAIPVNGGLAARYESSPLPQRGNIFNYWITVSKPVFRKMLFPTLLQTVFASYLGSRQYKLLIKALQLPEPDLEIH.

Residues 1–34 (MESHKPSTSKDDLILNIISRKIKQLPESDRNLLE) lie on the Mitochondrial matrix side of the membrane. Residues 35-55 (YGSAYIGLNAAFGGLIANSLF) traverse the membrane as a helical segment. At 56-57 (RR) the chain is on the mitochondrial intermembrane side. Residues 58-78 (ILNVTQARLASSLPMAVIPFL) form a helical membrane-spanning segment. Over 79–106 (TANLSYQSLVSLPLSTGDLNCETCTTTR) the chain is Mitochondrial matrix. The chain crosses the membrane as a helical span at residues 107-127 (GALVGLVMGGLYPILLAIPVN). The Mitochondrial intermembrane portion of the chain corresponds to 128–159 (GGLAARYESSPLPQRGNIFNYWITVSKPVFRK). A helical membrane pass occupies residues 160-176 (MLFPTLLQTVFASYLGS). Residues 177–196 (RQYKLLIKALQLPEPDLEIH) are Mitochondrial matrix-facing.

It belongs to the TMEM126 family. Interacts with OXA1L; promoting cotranslational quality control in mitochondria. In terms of tissue distribution, in the retina, significant levels of expression are detected in the ganglion cell layer, the optic nerve head, the outer plexiform layer, and in the outer ellipsoide length of photoreceptor inner segments.

Its subcellular location is the mitochondrion inner membrane. Its function is as follows. Protein required for the cotranslational protein quality control in the inner membrane of the mitochondria. Associates with newly synthesized polypeptides and may act as a chaperone that cooperates with OXA1L for the insertion of newly synthesized mitochondrial proteins into the inner membrane. Required for the assembly of the ND4 module of mitochondrial complex I. This Mus musculus (Mouse) protein is Transmembrane protein 126A.